A 384-amino-acid polypeptide reads, in one-letter code: Alanine racemase (384 aa).

Residue Lys39 is the Proton acceptor; specific for D-alanine of the active site. Position 39 is an N6-(pyridoxal phosphate)lysine (Lys39). Arg138 is a binding site for substrate. Tyr265 (proton acceptor; specific for L-alanine) is an active-site residue. A substrate-binding site is contributed by Met312.

Belongs to the alanine racemase family. Pyridoxal 5'-phosphate serves as cofactor.

The catalysed reaction is L-alanine = D-alanine. It functions in the pathway amino-acid biosynthesis; D-alanine biosynthesis; D-alanine from L-alanine: step 1/1. Functionally, catalyzes the interconversion of L-alanine and D-alanine. May also act on other amino acids. This chain is Alanine racemase (alr), found in Staphylococcus carnosus (strain TM300).